Consider the following 147-residue polypeptide: Cyanate hydratase (147 aa).

Catalysis depends on residues R88, E91, and S114.

It belongs to the cyanase family.

The catalysed reaction is cyanate + hydrogencarbonate + 3 H(+) = NH4(+) + 2 CO2. Its function is as follows. Catalyzes the reaction of cyanate with bicarbonate to produce ammonia and carbon dioxide. This is Cyanate hydratase from Ralstonia pickettii (strain 12J).